Consider the following 199-residue polypeptide: Securin (199 aa).

Disordered stretches follow at residues 1–23 (MATLIFVDKDNEEPGSRLASKDG) and 58–108 (RKAL…DDAY). N-acetylalanine is present on alanine 2. The segment covering 7–23 (VDKDNEEPGSRLASKDG) has biased composition (basic and acidic residues). A D-box motif is present at residues 58-61 (RKAL). The TEK-box 1 signature appears at 68–70 (TEK). A compositionally biased stretch (polar residues) spans 76–85 (KPLQSKQPTL). The TEK-box 2 motif lies at 91 to 93 (TEK). Residue serine 162 is modified to Phosphoserine. An SH3-binding motif is present at residues 179–192 (PPSALSALDVELPP).

It belongs to the securin family. As to quaternary structure, interacts with the caspase-like ESPL1, and prevents its protease activity by covering its active site. Interacts with p53/TP53 and blocks its activity probably by blocking its binding to DNA. Interacts with the Ku 70 kDa subunit of ds-DNA kinase. Interacts with PTTG1IP. Interacts with RPS10 and DNAJA1. In terms of processing, phosphorylated at Ser-162 by CDK1 during mitosis. Phosphorylated in vitro by ds-DNA kinase. Post-translationally, ubiquitinated through 'Lys-11' linkage of ubiquitin moieties by the anaphase promoting complex (APC) at the onset of anaphase, conducting to its degradation. 'Lys-11'-linked ubiquitination is mediated by the E2 ligase UBE2C/UBCH10. Expressed at low level in most tissues, except in adult testis, where it is highly expressed. Expressed in both spermatocytes and spermatids.

The protein resides in the cytoplasm. The protein localises to the nucleus. Functionally, regulatory protein, which plays a central role in chromosome stability, in the p53/TP53 pathway, and DNA repair. Probably acts by blocking the action of key proteins. During the mitosis, it blocks Separase/ESPL1 function, preventing the proteolysis of the cohesin complex and the subsequent segregation of the chromosomes. At the onset of anaphase, it is ubiquitinated, conducting to its destruction and to the liberation of ESPL1. Its function is however not limited to a blocking activity, since it is required to activate ESPL1. Negatively regulates the transcriptional activity and related apoptosis activity of p53/TP53. The negative regulation of p53/TP53 may explain the strong transforming capability of the protein when it is overexpressed. May also play a role in DNA repair via its interaction with Ku, possibly by connecting DNA damage-response pathways with sister chromatid separation. This is Securin (Pttg1) from Rattus norvegicus (Rat).